The primary structure comprises 264 residues: Tritrans,polycis-undecaprenyl-diphosphate synthase (geranylgeranyl-diphosphate specific) (264 aa).

The active site involves Asp-43. Residue Asp-43 coordinates Mg(2+). Substrate-binding positions include 44-47, Trp-48, His-60, and 88-90; these read GNRR and STE. Residue Asn-91 is the Proton acceptor of the active site. Substrate is bound by residues Phe-92, Arg-94, Arg-213, and 219–221; that span reads RIS. Glu-232 serves as a coordination point for Mg(2+).

It belongs to the UPP synthase family. As to quaternary structure, homodimer. It depends on Mg(2+) as a cofactor.

It catalyses the reaction geranylgeranyl diphosphate + 7 isopentenyl diphosphate = tri-trans,hepta-cis-undecaprenyl diphosphate + 7 diphosphate. Its function is as follows. Catalyzes the sequential condensation of isopentenyl diphosphate (IPP) with geranylgeranyl diphosphate (GGPP) to yield (2Z,6Z,10Z,14Z,18Z,22Z,26Z,30E,34E,38E)-undecaprenyl diphosphate (tritrans,heptacis-UPP). It is probably the precursor of glycosyl carrier lipids. The protein is Tritrans,polycis-undecaprenyl-diphosphate synthase (geranylgeranyl-diphosphate specific) of Pyrococcus abyssi (strain GE5 / Orsay).